The chain runs to 81 residues: Cytotoxin I-like P-15 (81 aa).

The N-terminal stretch at 1 to 21 (MKTLLLTLAAATIVCLDLGYT) is a signal peptide. 4 disulfides stabilise this stretch: C24–C42, C35–C59, C63–C74, and C75–C80.

Belongs to the three-finger toxin family. Short-chain subfamily. Type IA cytotoxin sub-subfamily. As to quaternary structure, monomer in solution; Homodimer and oligomer in the presence of negatively charged lipids forming a pore with a size ranging between 20 and 30 Angstroms. Expressed by the venom gland.

Its subcellular location is the secreted. It is found in the target cell membrane. Shows cytolytic activity on many different cells by forming pore in lipid membranes. In vivo, increases heart rate or kills the animal by cardiac arrest. In addition, it binds to heparin with high affinity, interacts with Kv channel-interacting protein 1 (KCNIP1) in a calcium-independent manner, and binds to integrin alpha-V/beta-3 (ITGAV/ITGB3) with moderate affinity. The polypeptide is Cytotoxin I-like P-15 (Naja atra (Chinese cobra)).